The sequence spans 258 residues: NAD kinase (258 aa).

The active-site Proton acceptor is the D45. NAD(+)-binding positions include 45 to 46 (DG), 117 to 118 (NE), D147, A155, 158 to 163 (TAYNYS), and A182.

Belongs to the NAD kinase family. It depends on a divalent metal cation as a cofactor.

It localises to the cytoplasm. The enzyme catalyses NAD(+) + ATP = ADP + NADP(+) + H(+). In terms of biological role, involved in the regulation of the intracellular balance of NAD and NADP, and is a key enzyme in the biosynthesis of NADP. Catalyzes specifically the phosphorylation on 2'-hydroxyl of the adenosine moiety of NAD to yield NADP. This chain is NAD kinase, found in Xanthomonas campestris pv. campestris (strain 8004).